The chain runs to 722 residues: Zinc finger protein 600 (722 aa).

The C2H2-type 1; degenerate zinc-finger motif lies at 162 to 184 (FQCNESGKAFNCSSLLRKHQIPH). 9 consecutive C2H2-type zinc fingers follow at residues 190 to 212 (YKCD…CRCH), 218 to 240 (YKCN…RRLH), 246 to 268 (HKCN…KAIH), 274 to 296 (YKCN…RRIH), 302 to 324 (YKCE…KRIH), 330 to 352 (YKCK…KRIH), 358 to 380 (YKCN…HRLH), 386 to 408 (YKCK…TRIH), and 414 to 436 (YKCN…KSIH). The segment at 442–464 (YKYEECEKVFSCGSTLETHKIIH) adopts a C2H2-type 11; degenerate zinc-finger fold. C2H2-type zinc fingers lie at residues 470–492 (YKCK…TRIH), 498–520 (YKCN…RRVH), 526–548 (YKCN…RRLH), 554–576 (YKCN…RRLH), 582–604 (YKCT…TRIH), 610–632 (YKCN…HRIH), 638–660 (YKCE…RRIH), 666–688 (YKCK…TGLH), and 694–716 (YKCN…QAVH).

It belongs to the krueppel C2H2-type zinc-finger protein family.

Its subcellular location is the nucleus. In terms of biological role, may be involved in transcriptional regulation. In Homo sapiens (Human), this protein is Zinc finger protein 600 (ZNF600).